A 30-amino-acid chain; its full sequence is Thermophilic aminopeptidase 1 alpha chain (30 aa).

This sequence belongs to the peptidase M42 family. In terms of assembly, 12 chains of two different but homologous types, alpha and beta, which can combine in various ratios. A divalent metal cation serves as cofactor.

Functionally, metalloenzyme of broad specificity, releasing all N-terminal amino acids. This chain is Thermophilic aminopeptidase 1 alpha chain, found in Geobacillus stearothermophilus (Bacillus stearothermophilus).